Here is a 130-residue protein sequence, read N- to C-terminus: Large ribosomal subunit protein bL12 (130 aa).

Belongs to the bacterial ribosomal protein bL12 family. Homodimer. Part of the ribosomal stalk of the 50S ribosomal subunit. Forms a multimeric L10(L12)X complex, where L10 forms an elongated spine to which 2 to 4 L12 dimers bind in a sequential fashion. Binds GTP-bound translation factors.

In terms of biological role, forms part of the ribosomal stalk which helps the ribosome interact with GTP-bound translation factors. Is thus essential for accurate translation. The chain is Large ribosomal subunit protein bL12 from Thermobifida fusca (strain YX).